The chain runs to 60 residues: Large ribosomal subunit protein uL30 (60 aa).

The protein belongs to the universal ribosomal protein uL30 family. In terms of assembly, part of the 50S ribosomal subunit.

This chain is Large ribosomal subunit protein uL30, found in Pseudoalteromonas translucida (strain TAC 125).